Consider the following 417-residue polypeptide: uncharacterized protein (417 aa).

The protein belongs to the MG032/MG096/MG288 family.

This is an uncharacterized protein from Mycoplasma pneumoniae (strain ATCC 29342 / M129 / Subtype 1) (Mycoplasmoides pneumoniae).